The chain runs to 180 residues: ATP-dependent protease subunit HslV (180 aa).

Threonine 7 is an active-site residue. Na(+) contacts are provided by glycine 163, cysteine 166, and threonine 169.

The protein belongs to the peptidase T1B family. HslV subfamily. As to quaternary structure, a double ring-shaped homohexamer of HslV is capped on each side by a ring-shaped HslU homohexamer. The assembly of the HslU/HslV complex is dependent on binding of ATP.

The protein resides in the cytoplasm. It catalyses the reaction ATP-dependent cleavage of peptide bonds with broad specificity.. Its activity is regulated as follows. Allosterically activated by HslU binding. Protease subunit of a proteasome-like degradation complex believed to be a general protein degrading machinery. This chain is ATP-dependent protease subunit HslV, found in Alcanivorax borkumensis (strain ATCC 700651 / DSM 11573 / NCIMB 13689 / SK2).